The chain runs to 277 residues: Thymidylate synthase (277 aa).

R21 contributes to the dUMP binding site. H51 is a (6R)-5,10-methylene-5,6,7,8-tetrahydrofolate binding site. A dUMP-binding site is contributed by 139–140; the sequence is RR. C159 serves as the catalytic Nucleophile. DUMP is bound by residues 179-182, N190, and 220-222; these read RSAD and HIY. Residue D182 coordinates (6R)-5,10-methylene-5,6,7,8-tetrahydrofolate. A276 contacts (6R)-5,10-methylene-5,6,7,8-tetrahydrofolate.

Belongs to the thymidylate synthase family. Bacterial-type ThyA subfamily. As to quaternary structure, homodimer.

The protein resides in the cytoplasm. It carries out the reaction dUMP + (6R)-5,10-methylene-5,6,7,8-tetrahydrofolate = 7,8-dihydrofolate + dTMP. Its pathway is pyrimidine metabolism; dTTP biosynthesis. Its function is as follows. Catalyzes the reductive methylation of 2'-deoxyuridine-5'-monophosphate (dUMP) to 2'-deoxythymidine-5'-monophosphate (dTMP) while utilizing 5,10-methylenetetrahydrofolate (mTHF) as the methyl donor and reductant in the reaction, yielding dihydrofolate (DHF) as a by-product. This enzymatic reaction provides an intracellular de novo source of dTMP, an essential precursor for DNA biosynthesis. The chain is Thymidylate synthase from Roseobacter denitrificans (strain ATCC 33942 / OCh 114) (Erythrobacter sp. (strain OCh 114)).